A 434-amino-acid chain; its full sequence is Pancreatic lipase-related protein 2 (434 aa).

Cysteines 4 and 10 form a disulfide. The segment at 76–88 (IHGFTDSGENSWL) is required for galactolipase activity. A disulfide bridge links Cys92 with Cys103. Ser154 acts as the Nucleophile in catalysis. The Charge relay system role is filled by Asp178. Ca(2+) is bound by residues Glu189, Arg192, Asp194, and Asp197. The cysteines at positions 239 and 245 are disulfide-linked. Residues 240 to 244 (KTGIS) are required for galactolipase activity. Residue His247 is the Charge relay system of the active site. Disulfide bonds link Cys269-Cys280 and Cys283-Cys288. A glycan (N-linked (GlcNAc...) asparagine) is linked at Asn318. Residues 322–434 (WRYKVTVTLS…ENVEQTLSPC (113 aa)) form the PLAT domain. A disulfide bridge connects residues Cys418 and Cys434.

This sequence belongs to the AB hydrolase superfamily. Lipase family. In terms of tissue distribution, pancreas.

It is found in the secreted. The protein resides in the zymogen granule membrane. It localises to the cell projection. Its subcellular location is the neuron projection. The catalysed reaction is a triacylglycerol + H2O = a diacylglycerol + a fatty acid + H(+). The enzyme catalyses a 1,2-diacyl-3-O-(beta-D-galactosyl)-sn-glycerol + 2 H2O = 3-beta-D-galactosyl-sn-glycerol + 2 a fatty acid + 2 H(+). It carries out the reaction 1,2,3-tri-(9Z-octadecenoyl)-glycerol + H2O = di-(9Z)-octadecenoylglycerol + (9Z)-octadecenoate + H(+). It catalyses the reaction di-(9Z)-octadecenoylglycerol + H2O = (9Z-octadecenoyl)-glycerol + (9Z)-octadecenoate + H(+). The catalysed reaction is (9Z-octadecenoyl)-glycerol + H2O = glycerol + (9Z)-octadecenoate + H(+). The enzyme catalyses 1-(9Z-octadecenoyl)-glycerol + H2O = glycerol + (9Z)-octadecenoate + H(+). It carries out the reaction 1,2,3-tripropanoylglycerol + H2O = dipropanoylglycerol + propanoate + H(+). It catalyses the reaction 1,2,3-tributanoylglycerol + H2O = dibutanoylglycerol + butanoate + H(+). The catalysed reaction is 1,2,3-trioctanoylglycerol + H2O = dioctanoylglycerol + octanoate + H(+). The enzyme catalyses 1,2-didecanoylglycerol + H2O = decanoylglycerol + decanoate + H(+). It carries out the reaction long chain 1,2-diacyl-3-O-beta-D-galactosyl-sn-glycerol + H2O = long chain acyl-3-O-beta-D-galactosyl-sn-glycerol + a fatty acid + H(+). It catalyses the reaction 1,2-dioctanoyl-3-O-beta-D-galactosyl-sn-glycerol + H2O = octanoyl-3-(beta-D-galactosyl)-sn-glycerol + octanoate + H(+). The catalysed reaction is 1,2-didodecanoyl-3-beta-D-galactosyl-sn-glycerol + H2O = dodecanoyl-3-beta-D-galactosyl-sn-glycerol + dodecanoate + H(+). The enzyme catalyses 1-beta-D-galactosyl-2,3-didodecanoyl-sn-glycerol + H2O = 1-beta-D-galactosyl-dodecanoyl-sn-glycerol + dodecanoate + H(+). It carries out the reaction a 1,2-diacyl-3-O-[alpha-D-galactosyl-(1-&gt;6)-beta-D-galactosyl]-sn-glycerol + H2O = acyl-3-O-[alpha-D-galactosyl-(1-&gt;6)-beta-D-galactosyl]-sn-glycerol + a fatty acid + H(+). It catalyses the reaction long chain 1,2-diacyl-3-O-[alpha-D-galactosyl-(1-&gt;6)-beta-D-galactosyl]-sn-glycerol + H2O = long chain acyl-3-O-[alpha-D-galactosyl-(1-&gt;6)-beta-D-galactosyl]-sn-glycerol + a fatty acid + H(+). The catalysed reaction is 1,2-dioctanoyl-3-O-[alpha-D-galactosyl-(1-&gt;6)-beta-D-galactosyl]-sn-glycerol + H2O = octanoyl-3-O-[alpha-D-galactosyl-(1-&gt;6)-beta-D-galactosyl]-sn-glycerol + octanoate + H(+). The enzyme catalyses 1,2-didodecanoyl-3-O-[alpha-D-galactosyl-(1-&gt;6)-beta-D-galactosyl]-sn-glycerol + H2O = dodecanoyl-3-O-[alpha-D-galactosyl-(1-&gt;6)-beta-D-galactosyl]-sn-glycerol + dodecanoate + H(+). It carries out the reaction a 1,2-diacyl-sn-glycero-3-phosphocholine + H2O = a monoacyl-sn-glycero-3-phosphocholine + a fatty acid + H(+). It participates in glycerolipid metabolism; triacylglycerol degradation. Its pathway is glycolipid metabolism. CLPS stimulates triacylglycerol lipase activity. Not inhibited by bile salts. In terms of biological role, lipase that primarily hydrolyzes triglycerides and galactosylglycerides. In neonates, may play a major role in pancreatic digestion of dietary fats such as milk fat globules enriched in long-chain triglycerides. Hydrolyzes short-, medium- and long-chain fatty acyls in triglycerides without apparent positional specificity. Can completely deacylate triacylglycerols. When the liver matures and bile salt synthesis increases, likely functions mainly as a galactolipase and monoacylglycerol lipase. Hydrolyzes monogalactosyldiglycerols (MGDG) and digalactosyldiacylglycerols (DGDG) present in a plant-based diet, releasing long-chain polyunsaturated fatty acids. Hydrolyzes medium- and long-chain fatty acyls in galactolipids. May act together with LIPF to hydrolyze partially digested triglycerides. Hydrolyzes long-chain monoglycerides with high efficiency. In cytotoxic T cells, contributes to perforin-dependent cell lysis, but is unlikely to mediate direct cytotoxicity. Also has low phospholipase activity. In neurons, required for the localization of the phospholipid 1-oleoyl-2-palmitoyl-PC (OPPC) to neurite tips through acyl chain remodeling of membrane phospholipids. The resulting OPPC-rich lipid membrane domain recruits the t-SNARE protein STX4 by selectively interacting with the STX4 transmembrane domain and this promotes surface expression of the dopamine transporter SLC6A3/DAT at neurite tips by facilitating fusion of SLC6A3-containing transport vesicles with the plasma membrane. This chain is Pancreatic lipase-related protein 2, found in Cavia porcellus (Guinea pig).